Consider the following 268-residue polypeptide: tRNA pseudouridine synthase A (268 aa).

The active-site Nucleophile is Asp-52. Tyr-110 contacts substrate.

This sequence belongs to the tRNA pseudouridine synthase TruA family. Homodimer.

The catalysed reaction is uridine(38/39/40) in tRNA = pseudouridine(38/39/40) in tRNA. Functionally, formation of pseudouridine at positions 38, 39 and 40 in the anticodon stem and loop of transfer RNAs. This is tRNA pseudouridine synthase A from Prochlorococcus marinus subsp. pastoris (strain CCMP1986 / NIES-2087 / MED4).